The chain runs to 167 residues: Epithelial membrane protein 2 (167 aa).

A helical membrane pass occupies residues 1–21 (MLVLLAFIIAFHITSAALLFI). Residues Asn44, Asn47, and Asn52 are each glycosylated (N-linked (GlcNAc...) asparagine). The next 3 helical transmembrane spans lie at 67 to 87 (TMIL…LQLF), 95 to 115 (FVLT…AASI), and 143 to 163 (YILA…YLIL).

This sequence belongs to the PMP-22/EMP/MP20 family. In terms of assembly, interacts with PTK2; regulates PTK2 activation and localization. Interacts with ITGB3; regulates the levels of the heterodimer ITGA5-ITGB3 integrin surface expression. Interacts with P2RX7 (via C-terminus). Interacts with ITGB1; the interaction may be direct or indirect and ITGB1 has a heterodimer form. Expressed in ciliary body epithelia, sclera, cornea, and retinal pigment epithelium (at protein level). Expressed in lung and endometrial tissue; expression is particularly abundant in secretory endometrium (at protein level). Expressed in placental villous syncytiotrophoblasts and cytotrophoblasts and on the membrane of interstitial trophoblasts (at protein level).

The protein localises to the golgi apparatus membrane. The protein resides in the cell membrane. It is found in the apical cell membrane. Its subcellular location is the membrane raft. It localises to the cytoplasm. The protein localises to the nucleus. The protein resides in the perinuclear region. Functions as a key regulator of cell membrane composition by regulating protein surface expression. Also, plays a role in regulation of processes including cell migration, cell proliferation, cell contraction and cell adhesion. Regulates transepithelial migration of neutrophils into the alveolar lumen, potentially via mediation of cell surface expression of adhesion markers and lipid raft formation. Negatively regulates caveolae formation by reducing CAV1 expression and CAV1 amount by increasing lysosomal degradation. Facilitates surface trafficking and formation of lipid rafts bearing GPI-anchor proteins. Regulates surface expression of MHC1 and ICAM1 proteins increasing susceptibility to T-cell mediated cytotoxicity. Regulates the plasma membrane expression of the integrin heterodimers ITGA6-ITGB1, ITGA5-ITGB3 and ITGA5-ITGB1 resulting in modulation of cell-matrix adhesion. Also regulates many processes through PTK2. Regulates blood vessel endothelial cell migration and angiogenesis by regulating VEGF protein expression through PTK2 activation. Regulates cell migration and cell contraction through PTK2 and SRC activation. Regulates focal adhesion density, F-actin conformation and cell adhesion capacity through interaction with PTK2. Positively regulates cell proliferation. Plays a role during cell death and cell blebbing. Promotes angiogenesis and vasculogenesis through induction of VEGFA via a HIF1A-dependent pathway. Also plays a role in embryo implantation by regulating surface trafficking of integrin heterodimer ITGA5-ITGB3. Plays a role in placental angiogenesis and uterine natural killer cell regulation at the maternal-fetal placental interface, however not required in the maternal tissues for a viable pregnancy. Involved in the early stages of embryogenic development and cardiogenesis, potentially via regulation of epithelial-mesenchymal transition timing. May play a role in glomerular filtration. This is Epithelial membrane protein 2 (EMP2) from Homo sapiens (Human).